Consider the following 232-residue polypeptide: Large ribosomal subunit protein uL1 (232 aa).

This sequence belongs to the universal ribosomal protein uL1 family. As to quaternary structure, part of the 50S ribosomal subunit.

Binds directly to 23S rRNA. The L1 stalk is quite mobile in the ribosome, and is involved in E site tRNA release. Functionally, protein L1 is also a translational repressor protein, it controls the translation of the L11 operon by binding to its mRNA. The polypeptide is Large ribosomal subunit protein uL1 (Hahella chejuensis (strain KCTC 2396)).